The sequence spans 221 residues: MALVVKDIVKNFGEGLSETKVLKGINFEVEQGEFVILNGASGSGKTTLLTILGGLLSQTSGTVLYNDAPLFDKQHRPSDLRLEDIGFIFQSSHLVPYLKVIEQLTLVGQEAGMTKQQSSTRAIQLLKNIGLEDRLNVYPHQLSGGEKQRVAIMRAFMNNPKIILADEPTASLDADRATKVVEMIRQQIKEQQMIGIMITHDRRLFEYADRVIELEDGKITD.

Positions 3 to 221 constitute an ABC transporter domain; the sequence is LVVKDIVKNF…IELEDGKITD (219 aa). 39–46 contacts ATP; the sequence is GASGSGKT.

The protein belongs to the ABC transporter superfamily. HrtA family. The complex is composed of two ATP-binding proteins (HrtA), two transmembrane proteins (HrtB) and a solute-binding protein.

The protein resides in the cell membrane. In terms of biological role, part of the ABC transporter complex hrt involved in hemin import. Responsible for energy coupling to the transport system. This is Putative hemin import ATP-binding protein HrtA (hrtA) from Staphylococcus aureus (strain Mu50 / ATCC 700699).